The chain runs to 189 residues: Apolipoprotein D (189 aa).

The first 20 residues, 1–20, serve as a signal peptide directing secretion; that stretch reads MVPVLLLLPALAGLFGAAEG. Gln-21 is modified (pyrrolidone carboxylic acid). Disulfide bonds link Cys-28–Cys-134 and Cys-61–Cys-185. Residues Asn-65 and Asn-98 are each glycosylated (N-linked (GlcNAc...) asparagine).

This sequence belongs to the calycin superfamily. Lipocalin family. Homodimer.

Its subcellular location is the secreted. Functionally, APOD occurs in the macromolecular complex with lecithin-transport and binding of bilin. Appears to be able to transport a variety of ligands in a number of different contexts. This is Apolipoprotein D (APOD) from Bos taurus (Bovine).